The following is an 862-amino-acid chain: DNA mismatch repair protein MutS (862 aa).

604–611 (GPNMAGKS) lines the ATP pocket.

This sequence belongs to the DNA mismatch repair MutS family.

Functionally, this protein is involved in the repair of mismatches in DNA. It is possible that it carries out the mismatch recognition step. This protein has a weak ATPase activity. In Brevibacillus brevis (strain 47 / JCM 6285 / NBRC 100599), this protein is DNA mismatch repair protein MutS.